A 269-amino-acid chain; its full sequence is Trans-aconitate 2-methyltransferase (269 aa).

Belongs to the methyltransferase superfamily. Tam family.

It localises to the cytoplasm. The catalysed reaction is trans-aconitate + S-adenosyl-L-methionine = (E)-3-(methoxycarbonyl)pent-2-enedioate + S-adenosyl-L-homocysteine. Its function is as follows. Catalyzes the S-adenosylmethionine monomethyl esterification of trans-aconitate. In Streptomyces avermitilis (strain ATCC 31267 / DSM 46492 / JCM 5070 / NBRC 14893 / NCIMB 12804 / NRRL 8165 / MA-4680), this protein is Trans-aconitate 2-methyltransferase.